The following is a 113-amino-acid chain: UPF0212 protein MmarC6_1165 (113 aa).

This sequence belongs to the UPF0212 family.

The polypeptide is UPF0212 protein MmarC6_1165 (Methanococcus maripaludis (strain C6 / ATCC BAA-1332)).